We begin with the raw amino-acid sequence, 285 residues long: 4-diphosphocytidyl-2-C-methyl-D-erythritol kinase (285 aa).

Residue K12 is part of the active site. Position 95-105 (95-105 (PMGGGVGGGSS)) interacts with ATP. The active site involves D137.

This sequence belongs to the GHMP kinase family. IspE subfamily.

The catalysed reaction is 4-CDP-2-C-methyl-D-erythritol + ATP = 4-CDP-2-C-methyl-D-erythritol 2-phosphate + ADP + H(+). The protein operates within isoprenoid biosynthesis; isopentenyl diphosphate biosynthesis via DXP pathway; isopentenyl diphosphate from 1-deoxy-D-xylulose 5-phosphate: step 3/6. In terms of biological role, catalyzes the phosphorylation of the position 2 hydroxy group of 4-diphosphocytidyl-2C-methyl-D-erythritol. The sequence is that of 4-diphosphocytidyl-2-C-methyl-D-erythritol kinase from Actinobacillus pleuropneumoniae serotype 5b (strain L20).